Here is a 530-residue protein sequence, read N- to C-terminus: Membrane-bound lytic murein transglycosylase F (530 aa).

The N-terminal stretch at 1–27 is a signal peptide; it reads MTPFAYKLPIRALWLGLLSLLLVGCQI. A non-LT domain region spans residues 28–279; sequence DSEPKSELEK…SLEEKYIGHI (252 aa). The segment at 280-530 is LT domain; the sequence is GAFDYVDTRA…SAKPSTESKN (251 aa). Residue Glu-324 is part of the active site. The segment at 505–530 is disordered; that stretch reads ALESESLENSESSAEPSAKPSTESKN. The span at 513-530 shows a compositional bias: low complexity; the sequence is NSESSAEPSAKPSTESKN.

In the N-terminal section; belongs to the bacterial solute-binding protein 3 family. This sequence in the C-terminal section; belongs to the transglycosylase Slt family.

The protein localises to the cell outer membrane. It carries out the reaction Exolytic cleavage of the (1-&gt;4)-beta-glycosidic linkage between N-acetylmuramic acid (MurNAc) and N-acetylglucosamine (GlcNAc) residues in peptidoglycan, from either the reducing or the non-reducing ends of the peptidoglycan chains, with concomitant formation of a 1,6-anhydrobond in the MurNAc residue.. In terms of biological role, murein-degrading enzyme that degrades murein glycan strands and insoluble, high-molecular weight murein sacculi, with the concomitant formation of a 1,6-anhydromuramoyl product. Lytic transglycosylases (LTs) play an integral role in the metabolism of the peptidoglycan (PG) sacculus. Their lytic action creates space within the PG sacculus to allow for its expansion as well as for the insertion of various structures such as secretion systems and flagella. In Vibrio cholerae serotype O1 (strain ATCC 39541 / Classical Ogawa 395 / O395), this protein is Membrane-bound lytic murein transglycosylase F.